The primary structure comprises 589 residues: EZH inhibitory protein (589 aa).

3 disordered regions span residues 1 to 46 (MASS…LRLR), 61 to 548 (AGED…SGPN), and 561 to 589 (LDSS…KCRG). 2 stretches are compositionally biased toward gly residues: residues 29-38 (GPRGRGGPSG) and 105-114 (PKGGGKADQG). Over residues 147 to 161 (GAAGPPLPGARGSPA) the composition is skewed to low complexity. Over residues 193-204 (LRSSTSQGSGST) the composition is skewed to polar residues. Composition is skewed to low complexity over residues 299-308 (RSSASAVSPE), 325-334 (RSSASVVSPE), 351-360 (RSSASVVSPE), and 374-390 (PRAT…TTRS). Position 306 is a phosphoserine (S306). Basic and acidic residues predominate over residues 426–437 (MRLDLQVDREPE). The segment covering 438-449 (SEAEQEEQELES) has biased composition (acidic residues). Residues 450 to 465 (EPGPSSRPQASRSSSR) are compositionally biased toward low complexity. The sufficient for interaction with EZH2 stretch occupies residues 482 to 490 (RRPVRMRAS). The tract at residues 484–503 (PVRMRASSPSPPGRLYPLPK) is necessary and sufficient for inhibition of PRC2/EED-EZH1 and PRC2/EED-EZH2 complex activity. Low complexity predominate over residues 509–547 (VHSPSSSSSESSSVSSSHSPLNKAPDPGSSPPLSSLSGP). Positions 575–589 (AAPHTREEEDKKCRG) are enriched in basic and acidic residues.

Interacts with PRC2/EED-EZH1 complex member EZH1 and with PRC2/EED-EZH2 complex member EZH2; the interaction blocks EZH1/EZH2 methyltransferase activity. Interacts (via C-terminus) with SUZ12 which is a member of the PRC2/EED-EZH1 and PRC2/EED-EZH2 complexes. In terms of tissue distribution, highly expressed in ovary with lower expression in testis and very low levels in other tissues tested including prostate, brain, kidney, spleen and liver. During spermatogenesis, expressed mainly in spermatogonia with very low expression in spermatocytes I and II.

It is found in the nucleus. Its subcellular location is the cytoplasm. Its function is as follows. Inhibits PRC2/EED-EZH1 and PRC2/EED-EZH2 complex function by inhibiting EZH1/EZH2 methyltransferase activity, thereby causing down-regulation of histone H3 trimethylation at 'Lys-27' (H3K27me3). Probably inhibits methyltransferase activity by limiting the stimulatory effect of cofactors such as AEBP2 and JARID2. Inhibits H3K27me3 deposition during spermatogenesis and oogenesis. This chain is EZH inhibitory protein, found in Mus musculus (Mouse).